A 593-amino-acid chain; its full sequence is Solute carrier family 40 member 3, chloroplastic (593 aa).

The interval 1-23 (MSMSKLLSPPPTSPPGPALSRLP) is disordered. The N-terminal 51 residues, 1 to 51 (MSMSKLLSPPPTSPPGPALSRLPCRRVAPPPVLPFPFPLRRLTSRRVFATS), are a transit peptide targeting the chloroplast. Residues 8–17 (SPPPTSPPGP) are compositionally biased toward pro residues. Helical transmembrane passes span 181–201 (ILPV…AGPL), 219–239 (AAIQ…AFAV), 253–273 (FAVL…LGII), 303–322 (LLCE…KNNP), 323–343 (LTCI…LIFL), 403–423 (YVFV…TFLI), 431–451 (VIGA…FATA), 462–482 (AGAA…VVYL), 493–513 (LFAF…YSAI), 530–550 (IGAT…AVAV), and 557–577 (HFGA…GMYC).

This sequence belongs to the ferroportin (FP) (TC 2.A.100) family. SLC40A subfamily.

The protein resides in the membrane. It is found in the plastid. The protein localises to the chloroplast envelope. Functionally, may be involved in iron transport and iron homeostasis. The chain is Solute carrier family 40 member 3, chloroplastic from Oryza sativa subsp. japonica (Rice).